A 255-amino-acid polypeptide reads, in one-letter code: Aliphatic sulfonates import ATP-binding protein SsuB (255 aa).

The ABC transporter domain occupies 12-233 (LLLNAVSKHY…RLGSVRLAEL (222 aa)). An ATP-binding site is contributed by 44-51 (GRSGGGKS).

It belongs to the ABC transporter superfamily. Aliphatic sulfonates importer (TC 3.A.1.17.2) family. In terms of assembly, the complex is composed of two ATP-binding proteins (SsuB), two transmembrane proteins (SsuC) and a solute-binding protein (SsuA).

It localises to the cell inner membrane. It catalyses the reaction ATP + H2O + aliphatic sulfonate-[sulfonate-binding protein]Side 1 = ADP + phosphate + aliphatic sulfonateSide 2 + [sulfonate-binding protein]Side 1.. Functionally, part of the ABC transporter complex SsuABC involved in aliphatic sulfonates import. Responsible for energy coupling to the transport system. The chain is Aliphatic sulfonates import ATP-binding protein SsuB from Escherichia coli O6:H1 (strain CFT073 / ATCC 700928 / UPEC).